The following is a 398-amino-acid chain: G2/mitotic-specific cyclin-B2 (398 aa).

Position 8 is a phosphothreonine (threonine 8). Serine 11, serine 77, and serine 92 each carry phosphoserine. Position 94 is a phosphothreonine (threonine 94). 3 positions are modified to phosphoserine: serine 99, serine 392, and serine 398.

It belongs to the cyclin family. Cyclin AB subfamily. In terms of assembly, interacts with the CDK1 protein kinase to form a serine/threonine kinase holoenzyme complex also known as maturation promoting factor (MPF). The cyclin subunit imparts substrate specificity to the complex.

In terms of biological role, essential for the control of the cell cycle at the G2/M (mitosis) transition. The polypeptide is G2/mitotic-specific cyclin-B2 (CCNB2) (Homo sapiens (Human)).